The sequence spans 525 residues: Peptide chain release factor 3 (525 aa).

The region spanning 9-276 is the tr-type G domain; the sequence is AKRRTFAIIS…GFTRYAPAPQ (268 aa). GTP contacts are provided by residues 18–25, 86–90, and 140–143; these read SHPDAGKT, DTPGH, and NKFD.

Belongs to the TRAFAC class translation factor GTPase superfamily. Classic translation factor GTPase family. PrfC subfamily.

The protein resides in the cytoplasm. Increases the formation of ribosomal termination complexes and stimulates activities of RF-1 and RF-2. It binds guanine nucleotides and has strong preference for UGA stop codons. It may interact directly with the ribosome. The stimulation of RF-1 and RF-2 is significantly reduced by GTP and GDP, but not by GMP. This Francisella tularensis subsp. tularensis (strain WY96-3418) protein is Peptide chain release factor 3.